Here is a 74-residue protein sequence, read N- to C-terminus: Male-specific sperm protein Mst84Db (74 aa).

This sequence belongs to the MST(3)CGP family. As to expression, testis.

This chain is Male-specific sperm protein Mst84Db (Mst84Db), found in Drosophila melanogaster (Fruit fly).